We begin with the raw amino-acid sequence, 193 residues long: nitroreductase FRM2 (193 aa).

The protein belongs to the nitroreductase family. FMN serves as cofactor.

It is found in the cytoplasm. It localises to the nucleus. It carries out the reaction 4-(hydroxyamino)quinoline N-oxide + 2 NAD(+) + H2O = 4-nitroquinoline N-oxide + 2 NADH + 2 H(+). In terms of biological role, type II nitroreductase, able to reduce 4-nitroquinoline N-oxide (4-NQO) into 4-aminoquinoline-N-oxide (4-AQO) via 4-hydroxyaminoquinoline (4-HAQO), using NADH as reductant. involved in the oxidative stress response. Plays a possible role in the metal stress response. Involved in negative regulation of fatty acid metabolism. This Saccharomyces cerevisiae (strain ATCC 204508 / S288c) (Baker's yeast) protein is nitroreductase FRM2.